We begin with the raw amino-acid sequence, 635 residues long: ATP-dependent zinc metalloprotease FtsH (635 aa).

At 1–4 the chain is on the cytoplasmic side; sequence MVKN. A helical membrane pass occupies residues 5–25; the sequence is LVLWVVVAVIMMTAYQSFNSS. At 26-97 the chain is on the periplasmic side; it reads SVENSTDYTT…VEGTPFERRG (72 aa). A helical membrane pass occupies residues 98-118; that stretch reads FLSQILISWFPMLFLVGVWVF. The Cytoplasmic segment spans residues 119–635; that stretch reads FMRQMQGGGG…AVENTDDFNV (517 aa). Residue 191–198 coordinates ATP; the sequence is GPPGTGKT. H413 is a binding site for Zn(2+). E414 is a catalytic residue. Positions 417 and 491 each coordinate Zn(2+). Residues 593-635 form a disordered region; the sequence is NREPVTPPSGWGEPKTQQAAYANSTTNDTKPESAVENTDDFNV. Residues 607-620 show a composition bias toward polar residues; the sequence is KTQQAAYANSTTND.

The protein in the central section; belongs to the AAA ATPase family. It in the C-terminal section; belongs to the peptidase M41 family. As to quaternary structure, homohexamer. It depends on Zn(2+) as a cofactor.

The protein localises to the cell inner membrane. In terms of biological role, acts as a processive, ATP-dependent zinc metallopeptidase for both cytoplasmic and membrane proteins. Plays a role in the quality control of integral membrane proteins. The sequence is that of ATP-dependent zinc metalloprotease FtsH from Haemophilus influenzae (strain ATCC 51907 / DSM 11121 / KW20 / Rd).